Here is a 415-residue protein sequence, read N- to C-terminus: Serine hydroxymethyltransferase (415 aa).

(6S)-5,6,7,8-tetrahydrofolate-binding positions include leucine 120 and 124–126 (GHL). Lysine 229 bears the N6-(pyridoxal phosphate)lysine mark.

This sequence belongs to the SHMT family. In terms of assembly, homodimer. Pyridoxal 5'-phosphate serves as cofactor.

It is found in the cytoplasm. The enzyme catalyses (6R)-5,10-methylene-5,6,7,8-tetrahydrofolate + glycine + H2O = (6S)-5,6,7,8-tetrahydrofolate + L-serine. Its pathway is one-carbon metabolism; tetrahydrofolate interconversion. It participates in amino-acid biosynthesis; glycine biosynthesis; glycine from L-serine: step 1/1. In terms of biological role, catalyzes the reversible interconversion of serine and glycine with tetrahydrofolate (THF) serving as the one-carbon carrier. This reaction serves as the major source of one-carbon groups required for the biosynthesis of purines, thymidylate, methionine, and other important biomolecules. Also exhibits THF-independent aldolase activity toward beta-hydroxyamino acids, producing glycine and aldehydes, via a retro-aldol mechanism. This is Serine hydroxymethyltransferase from Caldicellulosiruptor bescii (strain ATCC BAA-1888 / DSM 6725 / KCTC 15123 / Z-1320) (Anaerocellum thermophilum).